Reading from the N-terminus, the 246-residue chain is E3 ubiquitin-protein ligase RNF182 (246 aa).

Residues 22–70 (CKICYNRYNLRQRKPKVLGCCHRVCAKCLYKLVDCGESPQCVIVCPFCR) form an RING-type zinc finger. Transmembrane regions (helical) follow at residues 184-204 (VFVWLLGLLYFSSLPLGIYLL) and 211-231 (LGVVFVSLVPSSLVILMIYGF).

In terms of assembly, interacts with ATP6V0C.

The protein localises to the membrane. It localises to the cytoplasm. The catalysed reaction is S-ubiquitinyl-[E2 ubiquitin-conjugating enzyme]-L-cysteine + [acceptor protein]-L-lysine = [E2 ubiquitin-conjugating enzyme]-L-cysteine + N(6)-ubiquitinyl-[acceptor protein]-L-lysine.. The protein operates within protein modification; protein ubiquitination. E3 ubiquitin-protein ligase that mediates the ubiquitination of atp6v0c and targets it to degradation via the ubiquitin-proteasome pathway. The polypeptide is E3 ubiquitin-protein ligase RNF182 (rnf182) (Xenopus laevis (African clawed frog)).